A 500-amino-acid polypeptide reads, in one-letter code: Probable cytosol aminopeptidase (500 aa).

Positions 264 and 269 each coordinate Mn(2+). The active site involves Lys276. Residues Asp287, Asp346, and Glu348 each contribute to the Mn(2+) site. Arg350 is an active-site residue.

It belongs to the peptidase M17 family. It depends on Mn(2+) as a cofactor.

The protein localises to the cytoplasm. The enzyme catalyses Release of an N-terminal amino acid, Xaa-|-Yaa-, in which Xaa is preferably Leu, but may be other amino acids including Pro although not Arg or Lys, and Yaa may be Pro. Amino acid amides and methyl esters are also readily hydrolyzed, but rates on arylamides are exceedingly low.. It catalyses the reaction Release of an N-terminal amino acid, preferentially leucine, but not glutamic or aspartic acids.. Its function is as follows. Presumably involved in the processing and regular turnover of intracellular proteins. Catalyzes the removal of unsubstituted N-terminal amino acids from various peptides. This chain is Probable cytosol aminopeptidase, found in Rhodopseudomonas palustris (strain TIE-1).